The chain runs to 147 residues: MVHWTAEEKQLITGLWGKVNVADCGAEALARLLIVYPWTQRFFASFGNLSSPTAILGNPMVRAHGKKVLTSFGDAVKNLDNIKNTFAQLSELHCDKLHVDPENFRLLGDILIIVLAAHFTKDFTPDCQAAWQKLVRVVAHALARKYH.

The Globin domain maps to 3–147 (HWTAEEKQLI…VAHALARKYH (145 aa)). Heme b contacts are provided by histidine 64 and histidine 93.

It belongs to the globin family. In terms of assembly, heterotetramer of two alpha chains and two beta chains. Red blood cells.

In terms of biological role, involved in oxygen transport from the lung to the various peripheral tissues. This chain is Hemoglobin subunit beta (HBB), found in Cairina moschata (Muscovy duck).